Consider the following 217-residue polypeptide: Ribulose-phosphate 3-epimerase (217 aa).

Ser-6 provides a ligand contact to substrate. Positions 29, 31, and 62 each coordinate a divalent metal cation. Residue Asp-31 is the Proton acceptor of the active site. Substrate is bound by residues His-62, Gly-138 to Gly-141, Asp-171 to Gly-173, and Gly-193 to Ser-194. Asp-171 is a binding site for a divalent metal cation. The Proton donor role is filled by Asp-171.

It belongs to the ribulose-phosphate 3-epimerase family. A divalent metal cation serves as cofactor.

The enzyme catalyses D-ribulose 5-phosphate = D-xylulose 5-phosphate. The protein operates within carbohydrate degradation. Its function is as follows. Catalyzes the reversible epimerization of D-ribulose 5-phosphate to D-xylulose 5-phosphate. The sequence is that of Ribulose-phosphate 3-epimerase from Helicobacter pylori (strain J99 / ATCC 700824) (Campylobacter pylori J99).